Consider the following 306-residue polypeptide: Nucleotide-binding protein MUL_1815 (306 aa).

ATP is bound at residue 29-36; the sequence is GLSGAGRG. 80–83 lines the GTP pocket; sequence DVRS.

Belongs to the RapZ-like family.

In terms of biological role, displays ATPase and GTPase activities. This chain is Nucleotide-binding protein MUL_1815, found in Mycobacterium ulcerans (strain Agy99).